The primary structure comprises 582 residues: Phosphoribosylaminoimidazole carboxylase (582 aa).

Residues 114–305 enclose the ATP-grasp domain; that stretch reads KKYLAERGVA…QFENHLRAIL (192 aa). 143–200 is a binding site for ATP; the sequence is AGRLGLPLMLKAKTLAYDGRGNSPLKSASSEDIQASLKFLGDRPLYAEGWAPFVKEVA.

The protein in the C-terminal section; belongs to the AIR carboxylase family. Class I subfamily.

The enzyme catalyses 5-amino-1-(5-phospho-D-ribosyl)imidazole-4-carboxylate + H(+) = 5-amino-1-(5-phospho-beta-D-ribosyl)imidazole + CO2. It participates in purine metabolism; IMP biosynthesis via de novo pathway; 5-amino-1-(5-phospho-D-ribosyl)imidazole-4-carboxylate from 5-amino-1-(5-phospho-D-ribosyl)imidazole (carboxylase route): step 1/1. The chain is Phosphoribosylaminoimidazole carboxylase (ADE2) from Cryptococcus neoformans var. neoformans serotype D (strain B-3501A) (Filobasidiella neoformans).